We begin with the raw amino-acid sequence, 272 residues long: Shikimate dehydrogenase (NADP(+)) (272 aa).

Residues Ser14–Ser16 and Thr61 contribute to the shikimate site. The active-site Proton acceptor is Lys65. Glu77 is an NADP(+) binding site. Shikimate-binding residues include Asn86 and Asp102. Residues Gly126 to Ala130, Asn149 to Arg154, and Met213 each bind NADP(+). Tyr215 provides a ligand contact to shikimate. An NADP(+)-binding site is contributed by Gly237.

Belongs to the shikimate dehydrogenase family. As to quaternary structure, homodimer.

The catalysed reaction is shikimate + NADP(+) = 3-dehydroshikimate + NADPH + H(+). The protein operates within metabolic intermediate biosynthesis; chorismate biosynthesis; chorismate from D-erythrose 4-phosphate and phosphoenolpyruvate: step 4/7. Involved in the biosynthesis of the chorismate, which leads to the biosynthesis of aromatic amino acids. Catalyzes the reversible NADPH linked reduction of 3-dehydroshikimate (DHSA) to yield shikimate (SA). This Escherichia coli O139:H28 (strain E24377A / ETEC) protein is Shikimate dehydrogenase (NADP(+)).